The primary structure comprises 529 residues: MNNVRPIRRALLSVSDKTGILEFAQALHAQGVELLSTGGTAKLLADNNIPVMEVSDYTGHPEIMDGRVKTLHPKIHGGILARRGIDEIVMEQNAIKPIDLVTVNLYPFAETVAKPGCTLADAVENIDIGGPTMVRSTAKNHKDTTIVVNAKDYGRVIAEMQANNGSTTLETRFDLAIAAFEHTAAYDGMIANYFGTMVPAHSNDECHDDSTFPRTFNSQFVKKQDLRYGENSHQKAAFYVDTQIDEASVASAIQLQGKALSYNNIADTDSALECVKEFEGPACVIVKHANPCGVALGANLLEAYDRAFKTDPTSAFGGIIAFNQELDAQTAQAIVDRQFVEVIIAPKVSQAARDIIAAKANVRLLECGEWNTKTTTLDYKRVNGGLLIQDRDQGMVNLEDVKVVSKRQPTAEQLKDLMFCWKVAKFVKSNAIVYAKDGMTIGVGAGQMSRVYSAKIAGIKAADEGLVVENSVMASDAFFPFRDGIDAAAAAGISCIIQPGGSIRDEEIIAAADEHGMAMVFTGMRHFRH.

The 148-residue stretch at 1-148 folds into the MGS-like domain; that stretch reads MNNVRPIRRA…KNHKDTTIVV (148 aa).

It belongs to the PurH family.

The catalysed reaction is (6R)-10-formyltetrahydrofolate + 5-amino-1-(5-phospho-beta-D-ribosyl)imidazole-4-carboxamide = 5-formamido-1-(5-phospho-D-ribosyl)imidazole-4-carboxamide + (6S)-5,6,7,8-tetrahydrofolate. It carries out the reaction IMP + H2O = 5-formamido-1-(5-phospho-D-ribosyl)imidazole-4-carboxamide. Its pathway is purine metabolism; IMP biosynthesis via de novo pathway; 5-formamido-1-(5-phospho-D-ribosyl)imidazole-4-carboxamide from 5-amino-1-(5-phospho-D-ribosyl)imidazole-4-carboxamide (10-formyl THF route): step 1/1. The protein operates within purine metabolism; IMP biosynthesis via de novo pathway; IMP from 5-formamido-1-(5-phospho-D-ribosyl)imidazole-4-carboxamide: step 1/1. The chain is Bifunctional purine biosynthesis protein PurH from Shewanella frigidimarina (strain NCIMB 400).